We begin with the raw amino-acid sequence, 196 residues long: ATP-dependent Clp protease proteolytic subunit (196 aa).

Catalysis depends on S98, which acts as the Nucleophile. Residue H123 is part of the active site.

The protein belongs to the peptidase S14 family. In terms of assembly, fourteen ClpP subunits assemble into 2 heptameric rings which stack back to back to give a disk-like structure with a central cavity, resembling the structure of eukaryotic proteasomes.

The protein localises to the cytoplasm. It carries out the reaction Hydrolysis of proteins to small peptides in the presence of ATP and magnesium. alpha-casein is the usual test substrate. In the absence of ATP, only oligopeptides shorter than five residues are hydrolyzed (such as succinyl-Leu-Tyr-|-NHMec, and Leu-Tyr-Leu-|-Tyr-Trp, in which cleavage of the -Tyr-|-Leu- and -Tyr-|-Trp bonds also occurs).. Cleaves peptides in various proteins in a process that requires ATP hydrolysis. Has a chymotrypsin-like activity. Plays a major role in the degradation of misfolded proteins. ClpXP is involved in the complete degradation of the Site-2 clipped anti-sigma-W factor RsiW. This results in the release of SigW and the transcription activation of the genes under the control of the sigma-W factor. In Geobacillus kaustophilus (strain HTA426), this protein is ATP-dependent Clp protease proteolytic subunit.